A 108-amino-acid chain; its full sequence is Class I hydrophobin 3 (108 aa).

Residues 1–17 (MFFQTTIVAALAFLAVA) form the signal peptide. Cystine bridges form between Cys-28–Cys-87, Cys-35–Cys-81, Cys-36–Cys-69, and Cys-88–Cys-101. Asn-37 is a glycosylation site (N-linked (GlcNAc...) asparagine).

Belongs to the fungal hydrophobin family. In terms of assembly, self-assembles to form functional amyloid fibrils called rodlets. Self-assembly into fibrillar rodlets occurs spontaneously at hydrophobic:hydrophilic interfaces and the rodlets further associate laterally to form amphipathic monolayers.

The protein resides in the secreted. The protein localises to the cell wall. Its function is as follows. Aerial growth, conidiation, and dispersal of filamentous fungi in the environment rely upon a capability of their secreting small amphipathic proteins called hydrophobins (HPBs) with low sequence identity. Class I can self-assemble into an outermost layer of rodlet bundles on aerial cell surfaces, conferring cellular hydrophobicity that supports fungal growth, development and dispersal; whereas Class II form highly ordered films at water-air interfaces through intermolecular interactions but contribute nothing to the rodlet structure. Vmh3 is a class I hydrophobin that is essential for the maintenance of the surface hydrophobicity of the mycelium and might be involved in the development of fruiting bodies. Plays an important role in hyphal resistance against environmental stress. Necessary for the efficient biodegradation of lignin. The sequence is that of Class I hydrophobin 3 from Pleurotus ostreatus (Oyster mushroom).